The primary structure comprises 1060 residues: RNA-binding protein 27 (1060 aa).

Basic and acidic residues-rich tracts occupy residues 91 to 102 (LVQEKEEIKEEV) and 124 to 143 (TRSESSERRTREKKREDGKW). Disordered regions lie at residues 91–143 (LVQE…DGKW) and 162–235 (WRRG…GAQS). The segment covering 165-185 (GRSKSRSKSRGLSRSRSRSRG) has biased composition (basic residues). Basic and acidic residues predominate over residues 186–211 (RSKDRDPNRNVEHRERSKFKSERNDL). Over residues 225-235 (SSEQYSSGAQS) the composition is skewed to polar residues. Residues 273–301 (LPPKRRCRDYDERGFCVLGDLCQFDHGND) form a C3H1-type zinc finger. 2 stretches are compositionally biased toward pro residues: residues 319 to 356 (PPPGLPPPPPPGMLMPPMPGPGPGPGPGPGPGPGPGPG) and 371 to 384 (QPPPSVVLPIPRPP). The tract at residues 319–412 (PPPGLPPPPP…PNLASVGTRL (94 aa)) is disordered. Residues 386–402 (TQSSLINSRDQPGTSAV) show a composition bias toward polar residues. Residue T447 is modified to Phosphothreonine. R455 is subject to Omega-N-methylarginine. A disordered region spans residues 565-592 (MSGLEGPLTKKPWLGKQGNNNQNKPGFL). Positions 579–588 (GKQGNNNQNK) are enriched in low complexity. The region spanning 600-674 (TKLEVKKIPQ…RFIRVLWHRE (75 aa)) is the RRM domain. Residues 809–886 (VQEVLKKKQE…KDELKTSSAV (78 aa)) adopt a coiled-coil conformation. S927 is modified (phosphoserine). Disordered stretches follow at residues 940–968 (PVGRGKTMSSQGRGRGRGRGGRGRGSLNH) and 1006–1060 (DRRL…SWRR). Phosphoserine occurs at positions 1012 and 1020. Acidic residues predominate over residues 1024 to 1053 (ETEEEEVKEEETETSDLFLPDDDDEDEDEY).

It is found in the cytoplasm. It localises to the nucleus speckle. In terms of biological role, may be involved in the turnover of nuclear polyadenylated (pA+) RNA. The polypeptide is RNA-binding protein 27 (Homo sapiens (Human)).